We begin with the raw amino-acid sequence, 306 residues long: Pantothenate kinase (306 aa).

An ATP-binding site is contributed by 91-98 (GSVAVGKS).

Belongs to the prokaryotic pantothenate kinase family.

The protein resides in the cytoplasm. The catalysed reaction is (R)-pantothenate + ATP = (R)-4'-phosphopantothenate + ADP + H(+). It functions in the pathway cofactor biosynthesis; coenzyme A biosynthesis; CoA from (R)-pantothenate: step 1/5. The sequence is that of Pantothenate kinase from Streptococcus suis (strain 05ZYH33).